The sequence spans 81 residues: ATP synthase subunit c, chloroplastic (81 aa).

The next 2 membrane-spanning stretches (helical) occupy residues 3–23 and 57–77; these read PLIS…ASIG and LAFM…LLFA.

The protein belongs to the ATPase C chain family. As to quaternary structure, F-type ATPases have 2 components, F(1) - the catalytic core - and F(0) - the membrane proton channel. F(1) has five subunits: alpha(3), beta(3), gamma(1), delta(1), epsilon(1). F(0) has four main subunits: a(1), b(1), b'(1) and c(10-14). The alpha and beta chains form an alternating ring which encloses part of the gamma chain. F(1) is attached to F(0) by a central stalk formed by the gamma and epsilon chains, while a peripheral stalk is formed by the delta, b and b' chains.

Its subcellular location is the plastid. The protein resides in the chloroplast thylakoid membrane. F(1)F(0) ATP synthase produces ATP from ADP in the presence of a proton or sodium gradient. F-type ATPases consist of two structural domains, F(1) containing the extramembraneous catalytic core and F(0) containing the membrane proton channel, linked together by a central stalk and a peripheral stalk. During catalysis, ATP synthesis in the catalytic domain of F(1) is coupled via a rotary mechanism of the central stalk subunits to proton translocation. Its function is as follows. Key component of the F(0) channel; it plays a direct role in translocation across the membrane. A homomeric c-ring of between 10-14 subunits forms the central stalk rotor element with the F(1) delta and epsilon subunits. This Acorus calamus var. americanus (American sweet flag) protein is ATP synthase subunit c, chloroplastic.